We begin with the raw amino-acid sequence, 1245 residues long: Nidogen-1 (1245 aa).

Residues 1-28 form the signal peptide; that stretch reads MLDASGCSWAMWTWALLQLLLLVGPGGC. The NIDO domain occupies 106–268; that stretch reads PFLADLDTTD…GVWVFEIGSP (163 aa). Asparagine 187 is a glycosylation site (N-linked (GlcNAc...) asparagine). Sulfotyrosine occurs at positions 290 and 295. Threonine 299 carries an O-linked (GalNAc...) threonine glycan. A disordered region spans residues 307–344; it reads VATPSPSHSPRRGYPDPHNVPRILSPGYEATERPRGVP. The O-linked (GalNAc...) serine glycan is linked to serine 331. Threonine 337 and threonine 345 each carry an O-linked (GalNAc...) threonine glycan. Residue threonine 348 is glycosylated (O-linked (GalNAc...) threonine; partial). The EGF-like 1 domain maps to 384-424; that stretch reads SQQTCANNRHQCSVHAECRDYATGFCCRCVANYTGNGRQCV. 19 disulfides stabilise this stretch: cysteine 388/cysteine 401, cysteine 395/cysteine 410, cysteine 409/cysteine 616, cysteine 412/cysteine 423, cysteine 670/cysteine 683, cysteine 677/cysteine 693, cysteine 695/cysteine 706, cysteine 712/cysteine 725, cysteine 719/cysteine 734, cysteine 736/cysteine 748, cysteine 760/cysteine 775, cysteine 767/cysteine 785, cysteine 787/cysteine 798, cysteine 804/cysteine 815, cysteine 809/cysteine 824, cysteine 826/cysteine 837, cysteine 847/cysteine 876, cysteine 887/cysteine 894, and cysteine 896/cysteine 917. Residue asparagine 415 is glycosylated (N-linked (GlcNAc...) asparagine). Residues 428 to 665 form the Nidogen G2 beta-barrel domain; sequence SPQRVNGKVK…GPVRDGSPDA (238 aa). One can recognise an EGF-like 2 domain in the interval 666-707; it reads LQNPCYIGTHGCDSNAACRPGPGTQFTCECSIGFRGDGQTCY. The short motif at 700–702 is the Cell attachment site element; it reads RGD. The 42-residue stretch at 708 to 749 folds into the EGF-like 3; calcium-binding domain; it reads DIDECSEQPSRCGNHAVCNNLPGTFRCECVEGYHFSDRGTCV. Positions 756–799 constitute an EGF-like 4 domain; sequence PINYCETGLHNCDIPQRAQCIYMGGSSYTCSCLPGFSGDGRACR. The EGF-like 5; calcium-binding domain maps to 800-838; it reads DVDECQHSRCHPDAFCYNTPGSFTCQCKPGYQGDGFRCM. One can recognise a Thyroglobulin type-1 domain in the interval 844–917; it reads KTRCQLEREH…RTPPGMRPPC (74 aa). O-linked (GalNAc...) threonine glycans are attached at residues threonine 920 and threonine 933. LDL-receptor class B repeat units follow at residues 988 to 1030, 1031 to 1073, 1074 to 1118, and 1119 to 1160; these read KVVY…DHLG, RTIF…DPVR, GNLY…DAFS, and SQLC…YGKN. The EGF-like 6 domain maps to 1206-1242; it reads GHNYCSVNNGGCTHLCLPTPGSRTCRCPDNTLGVDCI. Disulfide bonds link cysteine 1210-cysteine 1221, cysteine 1217-cysteine 1230, and cysteine 1232-cysteine 1241.

Interacts with FBLN1. Interacts with LGALS3BP. Interacts with PLXDC1. Interacts with SVEP1. N- and O-glycosylated.

It localises to the secreted. The protein localises to the extracellular space. It is found in the extracellular matrix. Its subcellular location is the basement membrane. Functionally, sulfated glycoprotein widely distributed in basement membranes and tightly associated with laminin. Also binds to collagen IV and perlecan. It probably has a role in cell-extracellular matrix interactions. The polypeptide is Nidogen-1 (Nid1) (Mus musculus (Mouse)).